Reading from the N-terminus, the 121-residue chain is Large ribosomal subunit protein uL18 (121 aa).

This sequence belongs to the universal ribosomal protein uL18 family. In terms of assembly, part of the 50S ribosomal subunit; part of the 5S rRNA/L5/L18/L25 subcomplex. Contacts the 5S and 23S rRNAs.

Its function is as follows. This is one of the proteins that bind and probably mediate the attachment of the 5S RNA into the large ribosomal subunit, where it forms part of the central protuberance. The chain is Large ribosomal subunit protein uL18 from Paraburkholderia phymatum (strain DSM 17167 / CIP 108236 / LMG 21445 / STM815) (Burkholderia phymatum).